A 555-amino-acid chain; its full sequence is Intraflagellar transport protein 56 (555 aa).

TPR repeat units lie at residues 57-90 (LKNL…EDPD), 151-184 (IEDQ…HRDY), and 393-426 (DDFN…KYRN).

The protein belongs to the IFT56 family. In terms of assembly, component of the IFT complex B.

It localises to the cell projection. Its subcellular location is the cilium. The protein resides in the flagellum. In terms of biological role, component of the intraflagellar transport (IFT) complex B required for transport of proteins in the motile cilium. Required for transport of specific ciliary cargo proteins related to motility, while it is neither required for IFT complex B assembly or motion nor for cilium assembly. This is Intraflagellar transport protein 56 from Chlamydomonas reinhardtii (Chlamydomonas smithii).